The following is a 109-amino-acid chain: uncharacterized protein (109 aa).

The disordered stretch occupies residues 1-25 (METKPNALTGTSLSSTSGQTTQKSI). Residues 8–22 (LTGTSLSSTSGQTTQ) show a composition bias toward low complexity. The chain crosses the membrane as a helical span at residues 42–62 (TFGLMAILNLALLLWTLLATL). Residues 84 to 109 (TTLQKNTPSAKNGLKNTTNKHSHEDM) are disordered. The segment covering 91–102 (PSAKNGLKNTTN) has biased composition (polar residues).

The protein localises to the host membrane. This is an uncharacterized protein from Bdellovibrio phage phiMH2K (Bacteriophage phiMH2K).